The following is a 223-amino-acid chain: 26S proteasome non-ATPase regulatory subunit 9 (223 aa).

Residues 103-121 (RDKEKQARDMAEAHKEAMS) are compositionally biased toward basic and acidic residues. Residues 103–141 (RDKEKQARDMAEAHKEAMSRKLGQSESQGPPRAFAKVNS) are disordered. A PDZ domain is found at 108–195 (QARDMAEAHK…KPLNVTVIRR (88 aa)). At Ser-129 the chain carries Phosphoserine.

This sequence belongs to the proteasome subunit p27 family. As to quaternary structure, interacts with PSMC3. Part of a transient complex (modulator) containing PSMD9, PSMC6 and PSMC3 formed during the assembly of the 26S proteasome. As to expression, expressed in all tissues tested, highly expressed in liver and kidney.

Acts as a chaperone during the assembly of the 26S proteasome, specifically of the base subcomplex of the PA700/19S regulatory complex (RC). During the base subcomplex assembly is part of an intermediate PSMD9:PSMC6:PSMC3 module, also known as modulator trimer complex; PSMD9 is released during the further base assembly process. The chain is 26S proteasome non-ATPase regulatory subunit 9 (PSMD9) from Homo sapiens (Human).